Reading from the N-terminus, the 868-residue chain is Lysosomal cholesterol signaling protein (868 aa).

Residues 1-36 (MDSYFSAKNSTLAGDMNATWPASHGFNATGDPPSMS) are Lumenal-facing. A PIN-like transporter region spans residues 1–368 (MDSYFSAKNS…SAWLLTFPTM (368 aa)). N-linked (GlcNAc...) asparagine glycans are attached at residues asparagine 9, asparagine 17, and asparagine 27. The chain crosses the membrane as a helical span at residues 37-57 (ITRLFPALLECFGIVLCGYIA). The cholesterol site is built by phenylalanine 41 and tyrosine 55. Topologically, residues 58 to 77 (GRANIITSTQAKGLGNFVSR) are cytoplasmic. A helical transmembrane segment spans residues 78–98 (FALPALLFKNMVVLNFSNVDW). Over 99 to 102 (AFLY) the chain is Lumenal. Residues 103–123 (SVLIGKASVFFIVCVLTLLVA) form a helical membrane-spanning segment. At 124-131 (SPESRFSK) the chain is on the cytoplasmic side. The chain crosses the membrane as a discontinuously helical span at residues 132 to 152 (AGLFPIFATQSNDFALGYPIV). The Lumenal segment spans residues 153–165 (EALYQSTYPEYLQ). The chain crosses the membrane as a helical span at residues 166 to 186 (YIYLVAPISLMMLNPIGFIFC). Topologically, residues 187–211 (EIQKSKDTQNASQNKAKIVGLGFLR) are cytoplasmic. A discontinuously helical membrane pass occupies residues 212-232 (VLQNPIVFMVFVGIAFNFILD). Residues 233-241 (KKIPVYMEN) are Lumenal-facing. The discontinuously helical transmembrane segment at 242–262 (FLDGLANSFSGSALFYLGLTM) threads the bilayer. The Cytoplasmic portion of the chain corresponds to 263–271 (VGKIRRLKK). Positions 264, 265, and 266 each coordinate cholesterol. Residues 272-292 (SAFVVLTLLITAKLLVLPLLC) form a helical membrane-spanning segment. Residues 293–313 (REMVELLDKGDSVVNHTSLSN) lie on the Lumenal side of the membrane. A glycan (N-linked (GlcNAc...) asparagine) is linked at asparagine 307. The chain crosses the membrane as a discontinuously helical span at residues 314 to 334 (YAFLYGVFPVAPGVAIFATQF). At 335–344 (NMEVEIITSG) the chain is on the cytoplasmic side. Residues 345 to 365 (MVISTFVSAPIMYVSAWLLTF) form a helical membrane-spanning segment. The Lumenal portion of the chain corresponds to 366–379 (PTMDAKPLAYAIQN). The tract at residues 378–715 (QNVSFDISII…FGIFGLDKHL (338 aa)) is GPCR. N-linked (GlcNAc...) asparagine glycosylation occurs at asparagine 379. The helical transmembrane segment at 380 to 400 (VSFDISIISLVSLIWSLSILL) threads the bilayer. The Cytoplasmic segment spans residues 401–412 (LSKKYKQLPHML). A helical transmembrane segment spans residues 413 to 433 (TANLLIAQTIVCAGMMIWNFV). At 434–436 (KEK) the chain is on the lumenal side. The helical transmembrane segment at 437-457 (NFVGQILVFVLLYSSLYSTYL) threads the bilayer. Over 458–478 (WTGLLAVSLFLLKKRESVQLP) the chain is Cytoplasmic. The helical transmembrane segment at 479–499 (VGIIIISGWGIPALLVGVLLI) threads the bilayer. Residues 500-518 (TGKHNGDSIDSAFFYGKEQ) are Lumenal-facing. A helical transmembrane segment spans residues 519–539 (MITTAVTLFCSILIAGVSLMC). The Cytoplasmic segment spans residues 540-658 (MNRTTQAGHY…GDPQLTRHVL (119 aa)). The segment at 550 to 582 (EGFGQSQNHKPVEPGSTAFEENPAPTNEPELFP) is disordered. Arginine 655 contacts cholesterol. A helical membrane pass occupies residues 659 to 679 (LCLLLIIGLFANLSSCLWWLF). The Lumenal portion of the chain corresponds to 680-689 (NHETGRLYVE). Residues 690 to 710 (LQFFCAVFNFGQGFISFGIFG) traverse the membrane as a helical segment. Residues 711–868 (LDKHLIILPF…SSPPSVSPKT (158 aa)) are Cytoplasmic-facing. Positions 755-833 (YHRDLCIRNI…DEYLFYRFLQ (79 aa)) constitute a DEP domain. The disordered stretch occupies residues 836–868 (PEQSPPARTLRDHQEESYKEIGHSSPPSVSPKT). Basic and acidic residues predominate over residues 844-857 (TLRDHQEESYKEIG).

In terms of assembly, homodimer; via the transporter region and DEP domain. Interacts with the GATOR1 complex; preventing interaction between GATOR1 and KICSTOR; interaction is disrupted upon cholesterol starvation. As to expression, widely expressed in adult tissues and during development. In brain, widely distributed in forebrain regions, while it shows a more restricted distribution in the midbrain and hindbrain regions. Expressed at highest level in the lateral part of striatum and hippocampus.

The protein localises to the lysosome membrane. Functionally, cholesterol-binding protein that acts as a regulator of mTORC1 signaling pathway. Acts as a sensor of cholesterol to signal cholesterol sufficiency to mTORC1: in presence of cholesterol, binds cholesterol, leading to disruption of the interaction between the GATOR1 and KICSTOR complexes and promotion of mTORC1 signaling. Upon cholesterol starvation, GPR155/LYCHOS is unable to perturb the association between GATOR1 and KICSTOR, leading to mTORC1 signaling inhibition. Binds indole-3-acetic acid and may play a role in tryptophan metabolism. This Mus musculus (Mouse) protein is Lysosomal cholesterol signaling protein.